The primary structure comprises 23 residues: Dermaseptin III-like peptide (23 aa).

In terms of tissue distribution, expressed by the skin glands.

It localises to the secreted. Its function is as follows. Possesses a potent antimicrobial activity against bacteria, fungi and protozoa. Probably acts by disturbing membrane functions with its amphipathic structure. This is Dermaseptin III-like peptide from Phyllomedusa burmeisteri (Brazilian common walking leaf frog).